A 260-amino-acid polypeptide reads, in one-letter code: Indole-3-glycerol phosphate synthase (260 aa).

Belongs to the TrpC family.

The enzyme catalyses 1-(2-carboxyphenylamino)-1-deoxy-D-ribulose 5-phosphate + H(+) = (1S,2R)-1-C-(indol-3-yl)glycerol 3-phosphate + CO2 + H2O. It functions in the pathway amino-acid biosynthesis; L-tryptophan biosynthesis; L-tryptophan from chorismate: step 4/5. This is Indole-3-glycerol phosphate synthase from Nocardioides sp. (strain ATCC BAA-499 / JS614).